A 356-amino-acid chain; its full sequence is Homoserine O-acetyltransferase (356 aa).

The AB hydrolase-1 domain maps to 50–335; sequence NVILVCHALT…DEPYGHDAFL (286 aa). Residue Ser-146 is the Nucleophile of the active site. Residue Arg-215 coordinates substrate. Residues Asp-302 and His-331 contribute to the active site. Asp-332 is a binding site for substrate.

This sequence belongs to the AB hydrolase superfamily. MetX family. Homodimer.

The protein resides in the cytoplasm. It carries out the reaction L-homoserine + acetyl-CoA = O-acetyl-L-homoserine + CoA. Its pathway is amino-acid biosynthesis; L-methionine biosynthesis via de novo pathway; O-acetyl-L-homoserine from L-homoserine: step 1/1. Its function is as follows. Transfers an acetyl group from acetyl-CoA to L-homoserine, forming acetyl-L-homoserine. This chain is Homoserine O-acetyltransferase, found in Chlorobaculum parvum (strain DSM 263 / NCIMB 8327) (Chlorobium vibrioforme subsp. thiosulfatophilum).